A 208-amino-acid polypeptide reads, in one-letter code: Ras-related protein M-Ras (208 aa).

GTP is bound by residues Asp21, Gly22, Gly23, Val24, Gly25, Lys26, Ser27, Ala28, Phe38, Val39, Pro40, Tyr42, Pro44, and Thr45. Ser27 lines the Mg(2+) pocket. Residues 42-50 (YDPTIEDSY) carry the Effector region motif. Mg(2+)-binding residues include Thr45 and Asp67. Positions 70, 126, 127, 129, 156, 157, and 158 each coordinate GTP. The residue at position 205 (Cys205) is a Cysteine methyl ester. Cys205 carries the S-geranylgeranyl cysteine lipid modification. Positions 206-208 (VIL) are cleaved as a propeptide — removed in mature form.

This sequence belongs to the small GTPase superfamily. Ras family. Component of the SHOC2-MRAS-PP1c (SMP) holophosphatase complex consisting of SHOC2, GTP-bound M-Ras/MRAS and the catalytic subunit of protein phosphatase 1 (either PPP1CA, PPP1CB or PPP1CC). Interacts (active GTP-bound form) with both SHOC2 and PP1c (all isoforms) to form a tertiary complex; SHOC2 and PP1c preferably bind M-Ras/MRAS, but they also bind K-Ras/KRAS, N-Ras/NRAS and H-Ras/HRAS. Interacts with RGL3. Interacts (active GTP-bound form preferentially) with RGS14. Requires Mg(2+) as cofactor. As to expression, expression highly restricted to the brain and heart.

Its subcellular location is the cell membrane. It catalyses the reaction GTP + H2O = GDP + phosphate + H(+). Its function is as follows. Signal transducer in the Ras-MAPK signaling pathway that regulates cell proliferation and survival. Core component of the SHOC2-MRAS-PP1c (SMP) holophosphatase complex that regulates the MAPK pathway activation. The formation of the SMP complex only occurs when MRAS is GTP-bound. MRAS has low intrinsic GTPase activity and may require additional factors for activation. The SMP complex specifically dephosphorylates the inhibitory phosphorylation at 'Ser-259' of RAF1 kinase, 'Ser-365' of BRAF kinase and 'Ser-214' of ARAF kinase, stimulating their kinase activities. The protein is Ras-related protein M-Ras (MRAS) of Homo sapiens (Human).